Here is a 293-residue protein sequence, read N- to C-terminus: ATP synthase subunit a (293 aa).

A run of 6 helical transmembrane segments spans residues 40 to 60 (DSLF…WLAA), 97 to 117 (LFVA…NALD), 151 to 171 (DLNV…YYGI), 188 to 208 (FHAH…LNLI), 225 to 245 (MFAG…WTGF), and 264 to 284 (AIFH…LTLV).

It belongs to the ATPase A chain family. In terms of assembly, F-type ATPases have 2 components, CF(1) - the catalytic core - and CF(0) - the membrane proton channel. CF(1) has five subunits: alpha(3), beta(3), gamma(1), delta(1), epsilon(1). CF(0) has three main subunits: a(1), b(2) and c(9-12). The alpha and beta chains form an alternating ring which encloses part of the gamma chain. CF(1) is attached to CF(0) by a central stalk formed by the gamma and epsilon chains, while a peripheral stalk is formed by the delta and b chains.

It localises to the cell inner membrane. In terms of biological role, key component of the proton channel; it plays a direct role in the translocation of protons across the membrane. This is ATP synthase subunit a from Bordetella bronchiseptica (strain ATCC BAA-588 / NCTC 13252 / RB50) (Alcaligenes bronchisepticus).